Here is a 130-residue protein sequence, read N- to C-terminus: Anti-adapter protein IraD (130 aa).

It belongs to the GpW/Gp25 family. IraD subfamily. In terms of assembly, interacts with RssB.

The protein resides in the cytoplasm. Its function is as follows. Inhibits RpoS proteolysis by regulating RssB activity, thereby increasing the stability of the sigma stress factor RpoS during oxidative stress. Its effect on RpoS stability is due to its interaction with RssB, which probably blocks the interaction of RssB with RpoS, and the consequent delivery of the RssB-RpoS complex to the ClpXP protein degradation pathway. This is Anti-adapter protein IraD from Escherichia coli O139:H28 (strain E24377A / ETEC).